Reading from the N-terminus, the 274-residue chain is Octanoyl-[GcvH]:protein N-octanoyltransferase (274 aa).

The 206-residue stretch at 37–242 (QGNDAVVRTW…AMKTLGATLS (206 aa)) folds into the BPL/LPL catalytic domain. Cys-141 serves as the catalytic Acyl-thioester intermediate.

Belongs to the octanoyltransferase LipL family.

It catalyses the reaction N(6)-octanoyl-L-lysyl-[glycine-cleavage complex H protein] + L-lysyl-[lipoyl-carrier protein] = N(6)-octanoyl-L-lysyl-[lipoyl-carrier protein] + L-lysyl-[glycine-cleavage complex H protein]. The protein operates within protein modification; protein lipoylation via endogenous pathway; protein N(6)-(lipoyl)lysine from octanoyl-[acyl-carrier-protein]. Catalyzes the amidotransfer (transamidation) of the octanoyl moiety from octanoyl-GcvH to the lipoyl domain of the E2 subunit of lipoate-dependent enzymes. This is Octanoyl-[GcvH]:protein N-octanoyltransferase from Macrococcus caseolyticus (strain JCSC5402) (Macrococcoides caseolyticum).